Reading from the N-terminus, the 600-residue chain is NADH-quinone oxidoreductase subunit C/D (600 aa).

Residues 1–190 (MVNNMTDLTA…DPFELTKAKQ (190 aa)) form an NADH dehydrogenase I subunit C region. The NADH dehydrogenase I subunit D stretch occupies residues 214–600 (DFMFLNLGPN…IDFVMSDVDR (387 aa)).

This sequence in the N-terminal section; belongs to the complex I 30 kDa subunit family. In the C-terminal section; belongs to the complex I 49 kDa subunit family. As to quaternary structure, NDH-1 is composed of 13 different subunits. Subunits NuoB, CD, E, F, and G constitute the peripheral sector of the complex.

It is found in the cell inner membrane. The enzyme catalyses a quinone + NADH + 5 H(+)(in) = a quinol + NAD(+) + 4 H(+)(out). Its function is as follows. NDH-1 shuttles electrons from NADH, via FMN and iron-sulfur (Fe-S) centers, to quinones in the respiratory chain. The immediate electron acceptor for the enzyme in this species is believed to be ubiquinone. Couples the redox reaction to proton translocation (for every two electrons transferred, four hydrogen ions are translocated across the cytoplasmic membrane), and thus conserves the redox energy in a proton gradient. This is NADH-quinone oxidoreductase subunit C/D from Salmonella paratyphi A (strain ATCC 9150 / SARB42).